The sequence spans 78 residues: Acyl carrier protein (78 aa).

One can recognise a Carrier domain in the interval 2-77 (DDLFKKIQQL…DAYEFIKSQQ (76 aa)). At Ser37 the chain carries O-(pantetheine 4'-phosphoryl)serine.

This sequence belongs to the acyl carrier protein (ACP) family. In terms of processing, 4'-phosphopantetheine is transferred from CoA to a specific serine of apo-ACP by AcpS. This modification is essential for activity because fatty acids are bound in thioester linkage to the sulfhydryl of the prosthetic group.

The protein localises to the cytoplasm. It functions in the pathway lipid metabolism; fatty acid biosynthesis. In terms of biological role, carrier of the growing fatty acid chain in fatty acid biosynthesis. The sequence is that of Acyl carrier protein from Treponema denticola (strain ATCC 35405 / DSM 14222 / CIP 103919 / JCM 8153 / KCTC 15104).